The following is a 305-amino-acid chain: Tetraspanin-12 (305 aa).

Residues 1–12 (MAREDSVKCLRC) are Cytoplasmic-facing. S-palmitoyl cysteine attachment occurs at residues Cys-9 and Cys-12. Residues 13-33 (LLYALNLLFWLMSISVLAVSA) form a helical membrane-spanning segment. Residues 34–59 (WMRDYLNNVLTLTAETRVEEAVILTY) lie on the Extracellular side of the membrane. The helical transmembrane segment at 60 to 80 (FPVVHPVMIAVCCFLIIVGML) threads the bilayer. At 81-89 (GYCGTVKRN) the chain is on the cytoplasmic side. Residue Cys-83 is the site of S-palmitoyl cysteine attachment. Residues 90–110 (LLLLAWYFGSLLVIFCVELAC) traverse the membrane as a helical segment. Topologically, residues 111–224 (GVWTYEQEIM…RGTKQLQVLR (114 aa)) are extracellular. Residues 225–245 (FLGISIGVTQILAMILTITLL) form a helical membrane-spanning segment. Residues 246 to 305 (WALYYDRREPGTDQMMALKNDTTQHLPCHSVELLKPSLSRIFEHTSMANSFNTHFEMEEL) are Cytoplasmic-facing.

Belongs to the tetraspanin (TM4SF) family. Component of a complex, at least composed of TSPAN12, FZD4 and norrin (NDP). Interacts (when palmitoylated) with ADAM10. Interacts with MMP14/MT1-MMP. Post-translationally, palmitoylated; required for interaction with ADAM10. The precise position of palmitoylated residues is unclear and occurs either on Cys-9, Cys-12 and/or Cys-83.

Its subcellular location is the cell membrane. Its function is as follows. Regulator of cell surface receptor signal transduction. Plays a central role in retinal vascularization by regulating norrin (NDP) signal transduction. Acts in concert with norrin (NDP) to promote FZD4 multimerization and subsequent activation of FZD4, leading to promote accumulation of beta-catenin (CTNNB1) and stimulate LEF/TCF-mediated transcriptional programs. Suprisingly, it only activates the norrin (NDP)-dependent activation of FZD4, while it does not activate the Wnt-dependent activation of FZD4, suggesting the existence of a Wnt-independent signaling that also promote accumulation the beta-catenin (CTNNB1). Acts as a regulator of membrane proteinases such as ADAM10 and MMP14/MT1-MMP. Activates ADAM10-dependent cleavage activity of amyloid precursor protein (APP). Activates MMP14/MT1-MMP-dependent cleavage activity. The chain is Tetraspanin-12 (TSPAN12) from Bos taurus (Bovine).